The primary structure comprises 945 residues: Valine--tRNA ligase (945 aa).

The short motif at 42–52 (PNVTGTLHMGH) is the 'HIGH' region element. A 'KMSKS' region motif is present at residues 552–556 (KMSKS). An ATP-binding site is contributed by lysine 555. Residues 879–945 (DKATETARLS…VQTQLSKLKD (67 aa)) adopt a coiled-coil conformation.

The protein belongs to the class-I aminoacyl-tRNA synthetase family. ValS type 1 subfamily. In terms of assembly, monomer.

The protein localises to the cytoplasm. It catalyses the reaction tRNA(Val) + L-valine + ATP = L-valyl-tRNA(Val) + AMP + diphosphate. Functionally, catalyzes the attachment of valine to tRNA(Val). As ValRS can inadvertently accommodate and process structurally similar amino acids such as threonine, to avoid such errors, it has a 'posttransfer' editing activity that hydrolyzes mischarged Thr-tRNA(Val) in a tRNA-dependent manner. The polypeptide is Valine--tRNA ligase (Neisseria meningitidis serogroup A / serotype 4A (strain DSM 15465 / Z2491)).